The primary structure comprises 145 residues: 3-hydroxyacyl-[acyl-carrier-protein] dehydratase FabZ (145 aa).

His48 is a catalytic residue.

The protein belongs to the thioester dehydratase family. FabZ subfamily.

It is found in the cytoplasm. The catalysed reaction is a (3R)-hydroxyacyl-[ACP] = a (2E)-enoyl-[ACP] + H2O. Its function is as follows. Involved in unsaturated fatty acids biosynthesis. Catalyzes the dehydration of short chain beta-hydroxyacyl-ACPs and long chain saturated and unsaturated beta-hydroxyacyl-ACPs. The polypeptide is 3-hydroxyacyl-[acyl-carrier-protein] dehydratase FabZ (Geobacillus sp. (strain WCH70)).